A 393-amino-acid chain; its full sequence is Succinate--CoA ligase [ADP-forming] subunit beta (393 aa).

In terms of domain architecture, ATP-grasp spans 9–245 (KMLFAQYGIP…PSQEDKCETY (237 aa)). ATP contacts are provided by residues K46, 53–55 (GRG), E99, I102, and E107. Mg(2+) is bound by residues N200 and D214. Substrate is bound by residues N265 and 322–324 (GIV).

It belongs to the succinate/malate CoA ligase beta subunit family. Heterotetramer of two alpha and two beta subunits. It depends on Mg(2+) as a cofactor.

It carries out the reaction succinate + ATP + CoA = succinyl-CoA + ADP + phosphate. It catalyses the reaction GTP + succinate + CoA = succinyl-CoA + GDP + phosphate. Its pathway is carbohydrate metabolism; tricarboxylic acid cycle; succinate from succinyl-CoA (ligase route): step 1/1. Its function is as follows. Succinyl-CoA synthetase functions in the citric acid cycle (TCA), coupling the hydrolysis of succinyl-CoA to the synthesis of either ATP or GTP and thus represents the only step of substrate-level phosphorylation in the TCA. The beta subunit provides nucleotide specificity of the enzyme and binds the substrate succinate, while the binding sites for coenzyme A and phosphate are found in the alpha subunit. The sequence is that of Succinate--CoA ligase [ADP-forming] subunit beta from Baumannia cicadellinicola subsp. Homalodisca coagulata.